The following is a 420-amino-acid chain: Protein disulfide isomerase Creld1 (420 aa).

The first 29 residues, 1–29, serve as a signal peptide directing secretion; sequence MAPQPLRGLVPFLLWCLSLFLSLPGPVWL. Residues 30 to 362 are Extracellular-facing; that stretch reads QPSPPPHSAP…GFFAEMTEDE (333 aa). Positions 46–49 match the CXXC motif; the sequence is CHTC. Disulfide bonds link Cys46/Cys49, Cys155/Cys169, Cys163/Cys181, and Cys183/Cys192. Positions 153-193 constitute an EGF-like 1 domain; that stretch reads LPCPGGTERPCGGYGQCEGEGTRGGSGHCDCQAGYGGEACG. The N-linked (GlcNAc...) asparagine glycan is linked to Asn205. 2 FU repeats span residues 208 to 255 and 268 to 315; these read HLVC…EQAT and SYEC…VVCP. Positions 278 to 281 match the CXXC motif; sequence CLGC. 4 disulfides stabilise this stretch: Cys278–Cys281, Cys309–Cys321, Cys314–Cys330, and Cys332–Cys343. The 38-residue stretch at 305–342 folds into the EGF-like 2; calcium-binding domain; that stretch reads DVDECETVVCPGENEQCENTEGSYRCVCAEGFRQEDGI. A helical membrane pass occupies residues 363 to 383; that stretch reads MVVLQQMFFGVIICALATLAA. A topological domain (cytoplasmic) is located at residue Lys384. The helical transmembrane segment at 385–405 threads the bilayer; sequence GDLVFTAIFIGAVAAMTGYWL. At 406-420 the chain is on the extracellular side; it reads SERSDRVLEGFIKGR.

The protein belongs to the CRELD family.

It localises to the membrane. It catalyses the reaction Catalyzes the rearrangement of -S-S- bonds in proteins.. Functionally, protein disulfide isomerase. Promotes the localization of acetylcholine receptors (AChRs) to the plasma membrane. In Rattus norvegicus (Rat), this protein is Protein disulfide isomerase Creld1 (Creld1).